A 152-amino-acid chain; its full sequence is Deoxyuridine 5'-triphosphate nucleotidohydrolase (152 aa).

Substrate contacts are provided by residues 71–73 (RSG), Asn84, 88–90 (LID), and Met98.

This sequence belongs to the dUTPase family. The cofactor is Mg(2+).

The catalysed reaction is dUTP + H2O = dUMP + diphosphate + H(+). Its pathway is pyrimidine metabolism; dUMP biosynthesis; dUMP from dCTP (dUTP route): step 2/2. This enzyme is involved in nucleotide metabolism: it produces dUMP, the immediate precursor of thymidine nucleotides and it decreases the intracellular concentration of dUTP so that uracil cannot be incorporated into DNA. The polypeptide is Deoxyuridine 5'-triphosphate nucleotidohydrolase (Hahella chejuensis (strain KCTC 2396)).